We begin with the raw amino-acid sequence, 137 residues long: Small ribosomal subunit protein uS11 (137 aa).

Positions 116-137 are disordered; the sequence is EDVTPIPHDGTRRPGGKRGRRV.

The protein belongs to the universal ribosomal protein uS11 family. As to quaternary structure, part of the 30S ribosomal subunit.

Its function is as follows. Located on the platform of the 30S subunit. The sequence is that of Small ribosomal subunit protein uS11 from Methanopyrus kandleri (strain AV19 / DSM 6324 / JCM 9639 / NBRC 100938).